A 623-amino-acid polypeptide reads, in one-letter code: AM-toxin biosynthesis protein 12-2 (623 aa).

Residues 110 to 129 are disordered; sequence TIPGTSQAKNTEPDHQASGL.

Its pathway is mycotoxin biosynthesis. Part of the gene clusters that mediate the biosynthesis of AM-toxins, host-selective toxins (HSTs) causing Alternaria blotch on apple, a worldwide distributed disease. AM-toxins are cyclic depsipeptides containing the 3 residues 2-hydroxy-isovaleric acid (2-HIV), dehydroalanine, L-alanine which are common for all 3 AM-toxins I to III. The fourth precursor is L-alpha-amino-methoxyphenyl-valeric acid (L-Amv) for AM-toxin I, L-alpha-amino-phenyl-valeric acid (L-Apv) for AM-toxin II, and L-alpha-amino-hydroxyphenyl-valeric acid (L-Ahv) for AM-toxin III. AM-toxins have two target sites for affecting susceptible apple cells; they cause invagination of the plasma membrane and electrolyte loss and chloroplast disorganization. The non-ribosomal peptide synthetase AMT1 contains 4 catalytic modules and is responsible for activation of each residue in AM-toxin. The aldo-keto reductase AMT2 catalyzes the conversion of 2-keto-isovaleric acid (2-KIV) to 2-hydroxy-isovaleric acid (2-HIV), one of the precursor residues incorporated by AMT1 during AM-toxin biosynthesis, by reduction of its ketone to an alcohol. The cytochrome P450 monooxygenase AMT3 and the thioesterase AMT4 are also important for AM-toxin production, but their exact function within the AM-toxin biosynthesis are not known yet. Up to 21 proteins (including AMT1 to AMT4) are predicted to be involved in AM-toxin biosynthesis since their expression ishighly up-regulated in AM-toxin-producing cultures. The sequence is that of AM-toxin biosynthesis protein 12-2 from Alternaria alternata (Alternaria rot fungus).